A 73-amino-acid polypeptide reads, in one-letter code: Translation initiation factor IF-1 (73 aa).

In terms of domain architecture, S1-like spans 1 to 73 (MAKKDGVIEL…ARGRIVYRYK (73 aa)).

The protein belongs to the IF-1 family. Component of the 30S ribosomal translation pre-initiation complex which assembles on the 30S ribosome in the order IF-2 and IF-3, IF-1 and N-formylmethionyl-tRNA(fMet); mRNA recruitment can occur at any time during PIC assembly.

The protein resides in the cytoplasm. Its function is as follows. One of the essential components for the initiation of protein synthesis. Stabilizes the binding of IF-2 and IF-3 on the 30S subunit to which N-formylmethionyl-tRNA(fMet) subsequently binds. Helps modulate mRNA selection, yielding the 30S pre-initiation complex (PIC). Upon addition of the 50S ribosomal subunit IF-1, IF-2 and IF-3 are released leaving the mature 70S translation initiation complex. In Tropheryma whipplei (strain TW08/27) (Whipple's bacillus), this protein is Translation initiation factor IF-1.